We begin with the raw amino-acid sequence, 228 residues long: Ras-related protein Rab-33B (228 aa).

Asparagine 41, valine 42, glycine 43, lysine 44, threonine 45, cysteine 46, threonine 60, and threonine 63 together coordinate GTP. Threonine 45 contacts Mg(2+). Positions 54-66 match the Switch 1 motif; it reads GRFPQRTEATIGV. Residues threonine 63 and aspartate 86 each coordinate Mg(2+). Positions 87 to 106 match the Switch 2 motif; the sequence is TAGQERFRKSMVQHYYRNVH. The GTP site is built by glycine 89, asparagine 146, lysine 147, aspartate 149, alanine 177, and lysine 178. 2 S-geranylgeranyl cysteine lipidation sites follow: cysteine 226 and cysteine 228. At cysteine 228 the chain carries Cysteine methyl ester.

The protein belongs to the small GTPase superfamily. Rab family. As to quaternary structure, interacts (GTP- and GDP-bound forms) with ATG16L1; the complex consists of a tetramer where two RAB33B molecules bind independently one molecule of the ATG16L1 homodimer; the interaction promotes ATG12-ATG5-ATG16L1 complex recruitment to phagophores. Interacts with ATG16L2; however interaction is approximately hundred times lower than for ATG16L1. Interacts with RIC1 (via C-terminus domain); the interaction is direct with a preference for RAB33B-GTP. Interacts with RGP1. Requires Mg(2+) as cofactor.

It is found in the golgi apparatus membrane. Its subcellular location is the golgi apparatus. The protein resides in the cis-Golgi network. The protein localises to the preautophagosomal structure membrane. It carries out the reaction GTP + H2O = GDP + phosphate + H(+). With respect to regulation, regulated by guanine nucleotide exchange factors (GEFs) which promote the exchange of bound GDP for free GTP. Regulated by GTPase activating proteins (GAPs) such as SGSM2 which increase the GTP hydrolysis activity. Inhibited by GDP dissociation inhibitors (GDIs). Functionally, the small GTPases Rab are key regulators of intracellular membrane trafficking, from the formation of transport vesicles to their fusion with membranes. Rabs cycle between an inactive GDP-bound form and an active GTP-bound form that is able to recruit to membranes different sets of downstream effectors directly responsible for vesicle formation, movement, tethering and fusion. RAB33B acts, in coordination with RAB6A, to regulate intra-Golgi retrograde trafficking. Participates in autophagosome formation by recruiting the ATG12-ATG5-ATG16L1 complex to phagophores, probably in a nucleotide-independent manner. In Gallus gallus (Chicken), this protein is Ras-related protein Rab-33B (RAB33B).